The primary structure comprises 537 residues: Pentatricopeptide repeat-containing protein At4g32450, mitochondrial (537 aa).

The transit peptide at 1 to 110 (MIYTLTRGSL…EHSEIINQRN (110 aa)) directs the protein to the mitochondrion. Polar residues predominate over residues 113-140 (WQSSDGCSSYGTTGNGVPQENNTGGNHF). Residues 113–148 (WQSSDGCSSYGTTGNGVPQENNTGGNHFQQDHSGHS) form a disordered region. 6 PPR repeats span residues 145 to 179 (SGHS…GYVV), 180 to 210 (DLPR…ITSS), 215 to 249 (DISA…NLET), 250 to 280 (WCGV…GNKP), 281 to 316 (DGEM…GIIP), and 317 to 347 (CMEH…MEPN). The segment at 412–442 (YGIRYMAAGDISRPENRELYMALKSLKEHMI) is type E(+) motif. The segment at 443-537 (EIGYVPLSKL…DGVCSCREYW (95 aa)) is type DYW motif.

This sequence belongs to the PPR family. PCMP-H subfamily.

The protein localises to the mitochondrion. This chain is Pentatricopeptide repeat-containing protein At4g32450, mitochondrial (PCMP-H63), found in Arabidopsis thaliana (Mouse-ear cress).